The following is an 878-amino-acid chain: Microtubule-associated protein homolog maph-1.1 (878 aa).

Disordered regions lie at residues 224–425 (ALSD…AQAT) and 456–518 (EIPP…PVVP). Composition is skewed to low complexity over residues 241–268 (PSAR…APRA), 278–293 (SRPT…PRTA), 310–321 (APTRAPVPARSA), and 328–339 (APAKPAANTAKA). 2 stretches are compositionally biased toward basic and acidic residues: residues 416 to 425 (PPRHEVAQAT) and 480 to 496 (EEDK…KPDP).

The protein belongs to the MAP1A/MAP1B/MAP1S family. Interacts with dlg-1.

The protein localises to the cell projection. It localises to the dendrite. It is found in the perikaryon. Its subcellular location is the axon. The protein resides in the cytoplasm. The protein localises to the cytoskeleton. This Caenorhabditis elegans protein is Microtubule-associated protein homolog maph-1.1.